We begin with the raw amino-acid sequence, 431 residues long: Adenylosuccinate synthetase (431 aa).

GTP-binding positions include 12-18 (GDEGKGK) and 40-42 (GHT). Asp13 functions as the Proton acceptor in the catalytic mechanism. Mg(2+) contacts are provided by Asp13 and Gly40. Residues 13-16 (DEGK), 38-41 (NAGH), Thr131, Arg145, Gln225, Thr240, and Arg304 each bind IMP. Catalysis depends on His41, which acts as the Proton donor. 300-306 (TTTGRKR) is a substrate binding site. Residues Arg306, 332 to 334 (KLD), and 414 to 416 (STS) contribute to the GTP site.

It belongs to the adenylosuccinate synthetase family. In terms of assembly, homodimer. Mg(2+) serves as cofactor.

The protein localises to the cytoplasm. It catalyses the reaction IMP + L-aspartate + GTP = N(6)-(1,2-dicarboxyethyl)-AMP + GDP + phosphate + 2 H(+). It participates in purine metabolism; AMP biosynthesis via de novo pathway; AMP from IMP: step 1/2. Plays an important role in the de novo pathway of purine nucleotide biosynthesis. Catalyzes the first committed step in the biosynthesis of AMP from IMP. The polypeptide is Adenylosuccinate synthetase (Dinoroseobacter shibae (strain DSM 16493 / NCIMB 14021 / DFL 12)).